The following is a 299-amino-acid chain: HTH-type transcriptional regulator ArgP (299 aa).

The HTH lysR-type domain maps to 4–60 (PDYRTLQALDAVIRERGFERAAQKLCITQSAVSQRIKQLENMFGQPLLVRTVPPRPT). Residues 21–40 (FERAAQKLCITQSAVSQRIK) constitute a DNA-binding region (H-T-H motif).

It belongs to the LysR transcriptional regulatory family. As to quaternary structure, homodimer.

Controls the transcription of genes involved in arginine and lysine metabolism. This is HTH-type transcriptional regulator ArgP from Erwinia tasmaniensis (strain DSM 17950 / CFBP 7177 / CIP 109463 / NCPPB 4357 / Et1/99).